Here is a 393-residue protein sequence, read N- to C-terminus: Probable acetyl-CoA acetyltransferase (393 aa).

C88 (acyl-thioester intermediate) is an active-site residue. Active-site proton acceptor residues include H348 and C378.

The protein belongs to the thiolase-like superfamily. Thiolase family.

The protein localises to the cytoplasm. The catalysed reaction is 2 acetyl-CoA = acetoacetyl-CoA + CoA. The protein is Probable acetyl-CoA acetyltransferase (yqeF) of Escherichia coli (strain K12).